The chain runs to 391 residues: Putative gustatory receptor 36a (391 aa).

Residues 1 to 3 (MFD) are Cytoplasmic-facing. Residues 4–24 (WVGLLLKVLYYYGQIIGLINF) traverse the membrane as a helical segment. Residues 25–38 (EIDWQRGRVVAAQR) lie on the Extracellular side of the membrane. A helical membrane pass occupies residues 39–59 (GILFAIAINVLICMVLLLQIS). At 60–73 (KKFNLDVYFGRANQ) the chain is on the cytoplasmic side. The helical transmembrane segment at 74-94 (LHQYVIIVMVSLRMASGISAI) threads the bilayer. Residues 95 to 126 (LNRWRQRAQLMRLVECVLRLFLKKPHVKQMSR) lie on the Extracellular side of the membrane. The helical transmembrane segment at 127 to 147 (WAILVKFSVGVVSNFLQMAIS) threads the bilayer. Over 148–165 (MESLDRLGFNEFVGMASD) the chain is Cytoplasmic. The chain crosses the membrane as a helical span at residues 166–186 (FWMSAIINMAISQHYLVILFV). Residues 187-247 (RAYYHLLKTE…LQSIVTQLNQ (61 aa)) are Extracellular-facing. The helical transmembrane segment at 248-268 (VFGIQGIMVYGGYYIFSVATT) threads the bilayer. The Cytoplasmic portion of the chain corresponds to 269–290 (YITYSLAINGIEELHLSVRAAA). The helical transmembrane segment at 291–311 (LVFSWFLFYYTSAILNLFVML) threads the bilayer. Residues 312–391 (KLFDDHKEME…FLIQYDMEYF (80 aa)) lie on the Extracellular side of the membrane.

It belongs to the insect chemoreceptor superfamily. Gustatory receptor (GR) family. Gr22e subfamily.

The protein localises to the cell membrane. Its function is as follows. Probable gustatory receptor which mediates acceptance or avoidance behavior, depending on its substrates. The sequence is that of Putative gustatory receptor 36a (Gr36a) from Drosophila melanogaster (Fruit fly).